The chain runs to 444 residues: U-box domain-containing protein 31 (444 aa).

Residues Glu-59–Leu-133 enclose the U-box domain. 2 ARM repeats span residues Lys-301–Leu-340 and Glu-343–Lys-382.

The enzyme catalyses S-ubiquitinyl-[E2 ubiquitin-conjugating enzyme]-L-cysteine + [acceptor protein]-L-lysine = [E2 ubiquitin-conjugating enzyme]-L-cysteine + N(6)-ubiquitinyl-[acceptor protein]-L-lysine.. It functions in the pathway protein modification; protein ubiquitination. Functionally, functions as an E3 ubiquitin ligase. This Arabidopsis thaliana (Mouse-ear cress) protein is U-box domain-containing protein 31 (PUB31).